The primary structure comprises 590 residues: Aspartate--tRNA ligase (590 aa).

L-aspartate is bound at residue E172. Residues Q196–K199 form an aspartate region. R218 contributes to the L-aspartate binding site. Residues R218–E220 and Q227 each bind ATP. An L-aspartate-binding site is contributed by H449. E483 provides a ligand contact to ATP. L-aspartate is bound at residue R490. G535 to R538 contacts ATP.

It belongs to the class-II aminoacyl-tRNA synthetase family. Type 1 subfamily. As to quaternary structure, homodimer.

It localises to the cytoplasm. It catalyses the reaction tRNA(Asp) + L-aspartate + ATP = L-aspartyl-tRNA(Asp) + AMP + diphosphate. In terms of biological role, catalyzes the attachment of L-aspartate to tRNA(Asp) in a two-step reaction: L-aspartate is first activated by ATP to form Asp-AMP and then transferred to the acceptor end of tRNA(Asp). This chain is Aspartate--tRNA ligase, found in Glaesserella parasuis serovar 5 (strain SH0165) (Haemophilus parasuis).